A 189-amino-acid chain; its full sequence is Streptothricin acetyltransferase (189 aa).

The N-acetyltransferase domain maps to 44-189 (FALREVPADP…HALYMSMPCP (146 aa)). Positions 55–76 (LVKVFPDDGGSDGEDGAEGEDA) are disordered. Acidic residues predominate over residues 63-75 (GGSDGEDGAEGED).

Belongs to the acetyltransferase family. GNAT subfamily.

The enzyme catalyses streptothricin F + acetyl-CoA = N(beta)-acetylstreptothricin F + CoA + H(+). Functionally, involved in resistance to streptothricin, a broad-spectrum antibiotic produced by streptomycetes. Detoxifies streptothricin via acetylation of the beta amino group of the first beta-lysyl moiety of streptothricin. The protein is Streptothricin acetyltransferase of Streptomyces lavendulae.